A 342-amino-acid polypeptide reads, in one-letter code: Ribosomal RNA small subunit methyltransferase C (342 aa).

The protein belongs to the methyltransferase superfamily. RsmC family. Monomer.

Its subcellular location is the cytoplasm. It carries out the reaction guanosine(1207) in 16S rRNA + S-adenosyl-L-methionine = N(2)-methylguanosine(1207) in 16S rRNA + S-adenosyl-L-homocysteine + H(+). Functionally, specifically methylates the guanine in position 1207 of 16S rRNA in the 30S particle. The polypeptide is Ribosomal RNA small subunit methyltransferase C (Shewanella sp. (strain MR-4)).